Reading from the N-terminus, the 733-residue chain is Vinexin (733 aa).

4 disordered regions span residues 1-51, 129-165, 224-285, and 352-448; these read MARI…SNLD, TWPG…RQDK, SARA…NQVP, and ETRL…KRKA. Basic and acidic residues predominate over residues 32 to 42; sequence DPNRVHTKEQL. Residues 147–157 show a composition bias toward polar residues; the sequence is QHAQNWSATWT. The SoHo domain maps to 164–232; that stretch reads DKRWVKYEGI…VSARASSAEP (69 aa). Composition is skewed to polar residues over residues 245 to 256 and 264 to 277; these read PGTTETSSGRNW and RNTF…SSSG. Ser412 and Ser459 each carry phosphoserine. SH3 domains are found at residues 444–503 and 518–579; these read KKRK…VLPA and LEYG…INRE. The binds to vinculin stretch occupies residues 444–579; it reads KKRKAARLKF…PASYVQINRE (136 aa). Residues 584 to 672 are disordered; that stretch reads LCDDGPQLPA…INLGPSSPNT (89 aa). Ser594 carries the phosphoserine; by MAPK1 modification. A compositionally biased stretch (low complexity) spans 597-613; sequence PTTTAHLSSHSHPSSIP. 3 positions are modified to phosphoserine: Ser607, Ser610, and Ser624. Polar residues predominate over residues 638–651; the sequence is EPRSQTQSLNTPGP. The SH3 3 domain occupies 674–733; that stretch reads IHWTPYRAMYQYRPQNEDELELREGDRVDVMQQCDDGWFVGVSRRTQKFGTFPGNYVAPV. Residues 674-733 are binds to SOS; that stretch reads IHWTPYRAMYQYRPQNEDELELREGDRVDVMQQCDDGWFVGVSRRTQKFGTFPGNYVAPV.

As to quaternary structure, interacts with vinculin by the first two SH3 domains and the proline rich region of vinculin. Binds to SOS (guanine nucleotide exchange factor of RAS and RAC), through its third SH3 domain. The formation of this complex is down-regulated by phosphorylation of SOS. Interacts with SAFB2, INPPL1/SHIP2 and SRCIN1. Interacts with DLG5 through its third SH3 domain. Interacts with SOCS7 and MAPK1/ERK2. Interacts with FASLG. In terms of processing, phosphorylated at Ser-594 by MAPK1/ERK2 during cell spreading.

Its subcellular location is the cell junction. It localises to the focal adhesion. The protein resides in the cytoplasm. It is found in the cytoskeleton. Promotes up-regulation of actin stress fiber formation. The protein is Vinexin (Sorbs3) of Mus musculus (Mouse).